We begin with the raw amino-acid sequence, 396 residues long: MAKAKFERTKPHCNIGTIGHVDHGKTSLTAAITKVLAETGGATFTAYDQIDKAPEEKARGITISTAHVEYETTNRHYAHVDCPGHADYVKNMITGAAQMDGGILVVSAADGPMPQTREHILLARQVGVPALVVFLNKCDMVDDPELLELVEMEVRELLSKYDFPGDDIPIIKGSALAALENSDQKLGHDAILELMKAVDAYIPQPERPIDQPFLMPVEDVFSISGRGTVVTGRVERGIVKVGEEIEIVGIRDTQKTTCTGVEMFRKLLDQGQAGDNIGCLLRGTKREDVERGQVLCKPGSVKPHTKFKAEAYILTKEEGGRHTPFFTNYRPQFYFRTTDVTGVVHLPEGTEMVMPGDNIAMEVHLIVPIAMEEKLRFAIREGGRTVGAGVVASIIE.

The tr-type G domain maps to 10–206 (KPHCNIGTIG…AVDAYIPQPE (197 aa)). The tract at residues 19-26 (GHVDHGKT) is G1. 19–26 (GHVDHGKT) is a GTP binding site. Threonine 26 contacts Mg(2+). The segment at 60-64 (GITIS) is G2. The G3 stretch occupies residues 81–84 (DCPG). GTP is bound by residues 81–85 (DCPGH) and 136–139 (NKCD). A G4 region spans residues 136-139 (NKCD). The interval 174–176 (SAL) is G5.

It belongs to the TRAFAC class translation factor GTPase superfamily. Classic translation factor GTPase family. EF-Tu/EF-1A subfamily. In terms of assembly, monomer.

Its subcellular location is the cytoplasm. The enzyme catalyses GTP + H2O = GDP + phosphate + H(+). Its function is as follows. GTP hydrolase that promotes the GTP-dependent binding of aminoacyl-tRNA to the A-site of ribosomes during protein biosynthesis. The polypeptide is Elongation factor Tu (Rhodopseudomonas palustris (strain HaA2)).